Reading from the N-terminus, the 602-residue chain is MTISINEYSDLNNLAFGLGQDVSQDLKELVKVASIFMPDSKIHKWLIDTRLEEVVTDLNLRYELKSVITNTPISVTWKQLTGTRTKREANSLVQAVFPGQCSRLAIVDWAAKNYVSVAVAFGLLKFHRADKTFTISEIGIQAVKLYDSEELAELDKFLYERLLEYPYAAWLIRLLGNQPSKQFSKFDLGEHFGFIDELGFETAPIEIFLNGLAQAEIDGDKTAAQKIKSNFESTSDKYMRWLAGVLVTAGLATSTTKKVTHTYKNRKFELTLGTVYQITAKGLTALKEVNGKSRYPRSRKRVMWEFLATKDKEAIAKKTSRSLMLKHLTEKKNPIQAEVIATLINTDYPTLEITPEEVIDDCIGLNRIGIEILIDGDKLTLNDKLFDFEIPVQKDVVLEKSDIEKFKNQLRTELTNIDHSYLKGIDIASKKKTSNVENTEFEAISTKIFTDELGFSGKHLGGSNKPDGLLWDDDCAIILDSKAYSEGFPLTASHTDAMGRYLRQFTERKEEIKPTWWDIAPEHLDNTYFAYVSGSFSGNYKEQLQKFRQDTNHLGGALEFVKLLLLANNYKTQKMSKKEVKKSILDYNISYEEYAPLLAEIE.

The catalysed reaction is Endonucleolytic cleavage of DNA to give specific double-stranded fragments with terminal 5'-phosphates.. Functionally, an S subtype restriction enzyme that recognizes the double-stranded sequences 5'-GGATG-3' and 3'-CATCC-5' and cleaves respectively 15 bases after G-1 and 14 bases before C-1. This chain is Type II restriction enzyme StsI (stsIR), found in Streptococcus sanguinis.